Reading from the N-terminus, the 106-residue chain is Toxin-like structure LSTX-D4 (106 aa).

Positions Met1–Ser20 are cleaved as a signal peptide. The propeptide occupies Glu21–Arg41. Disulfide bonds link Cys45–Cys60, Cys52–Cys69, Cys59–Cys85, and Cys71–Cys83.

The protein belongs to the neurotoxin 19 (CSTX) family. 02 (D7) subfamily. In terms of tissue distribution, expressed by the venom gland.

The protein resides in the secreted. This chain is Toxin-like structure LSTX-D4, found in Lycosa singoriensis (Wolf spider).